We begin with the raw amino-acid sequence, 268 residues long: Tryptophan synthase alpha chain (268 aa).

Active-site proton acceptor residues include glutamate 49 and aspartate 60.

This sequence belongs to the TrpA family. Tetramer of two alpha and two beta chains.

The enzyme catalyses (1S,2R)-1-C-(indol-3-yl)glycerol 3-phosphate + L-serine = D-glyceraldehyde 3-phosphate + L-tryptophan + H2O. Its pathway is amino-acid biosynthesis; L-tryptophan biosynthesis; L-tryptophan from chorismate: step 5/5. The alpha subunit is responsible for the aldol cleavage of indoleglycerol phosphate to indole and glyceraldehyde 3-phosphate. This is Tryptophan synthase alpha chain from Salmonella agona (strain SL483).